Reading from the N-terminus, the 368-residue chain is tRNA(Met) cytidine acetate ligase (368 aa).

Residues 7–20, glycine 96, asparagine 152, and arginine 175 contribute to the ATP site; that span reads IAEF…HKYL.

Belongs to the TmcAL family.

It is found in the cytoplasm. It catalyses the reaction cytidine(34) in elongator tRNA(Met) + acetate + ATP = N(4)-acetylcytidine(34) in elongator tRNA(Met) + AMP + diphosphate. In terms of biological role, catalyzes the formation of N(4)-acetylcytidine (ac(4)C) at the wobble position of elongator tRNA(Met), using acetate and ATP as substrates. First activates an acetate ion to form acetyladenylate (Ac-AMP) and then transfers the acetyl group to tRNA to form ac(4)C34. The chain is tRNA(Met) cytidine acetate ligase from Streptococcus pyogenes serotype M4 (strain MGAS10750).